The sequence spans 490 residues: Xylulose kinase (490 aa).

Substrate is bound by residues His-99, Arg-170, Asp-280, and Asn-281. ATP-binding positions include Trp-355, 441–442, and Asn-445; that span reads GA.

Belongs to the FGGY kinase family. As to quaternary structure, monomer.

It carries out the reaction D-xylulose + ATP = D-xylulose 5-phosphate + ADP + H(+). Functionally, phosphorylates D-xylulose to produce D-xylulose 5-phosphate, a molecule that may play an important role in the regulation of glucose metabolism and lipogenesis. In Bos taurus (Bovine), this protein is Xylulose kinase (XYLB).